The following is a 438-amino-acid chain: Anthranilate synthase component 1 (438 aa).

Residues S45 and 220-222 (PYL) each bind L-tryptophan. 255-256 (GT) contacts chorismate. Position 282 (E282) interacts with Mg(2+). Chorismate-binding positions include Y370, R389, 405–407 (GAG), and G407. E420 serves as a coordination point for Mg(2+).

This sequence belongs to the anthranilate synthase component I family. Heterotetramer consisting of two non-identical subunits: a beta subunit (TrpG) and a large alpha subunit (TrpE). Mg(2+) serves as cofactor.

The enzyme catalyses chorismate + L-glutamine = anthranilate + pyruvate + L-glutamate + H(+). It functions in the pathway amino-acid biosynthesis; L-tryptophan biosynthesis; L-tryptophan from chorismate: step 1/5. Feedback inhibited by tryptophan. Part of a heterotetrameric complex that catalyzes the two-step biosynthesis of anthranilate, an intermediate in the biosynthesis of L-tryptophan. In the first step, the glutamine-binding beta subunit (TrpG) of anthranilate synthase (AS) provides the glutamine amidotransferase activity which generates ammonia as a substrate that, along with chorismate, is used in the second step, catalyzed by the large alpha subunit of AS (TrpE) to produce anthranilate. In the absence of TrpG, TrpE can synthesize anthranilate directly from chorismate and high concentrations of ammonia. The chain is Anthranilate synthase component 1 (trpE) from Aeropyrum pernix (strain ATCC 700893 / DSM 11879 / JCM 9820 / NBRC 100138 / K1).